The sequence spans 415 residues: Gamma-glutamyl phosphate reductase 1 (415 aa).

It belongs to the gamma-glutamyl phosphate reductase family.

It is found in the cytoplasm. It catalyses the reaction L-glutamate 5-semialdehyde + phosphate + NADP(+) = L-glutamyl 5-phosphate + NADPH + H(+). It participates in amino-acid biosynthesis; L-proline biosynthesis; L-glutamate 5-semialdehyde from L-glutamate: step 2/2. Functionally, catalyzes the NADPH-dependent reduction of L-glutamate 5-phosphate into L-glutamate 5-semialdehyde and phosphate. The product spontaneously undergoes cyclization to form 1-pyrroline-5-carboxylate. The protein is Gamma-glutamyl phosphate reductase 1 of Bacillus licheniformis (strain ATCC 14580 / DSM 13 / JCM 2505 / CCUG 7422 / NBRC 12200 / NCIMB 9375 / NCTC 10341 / NRRL NRS-1264 / Gibson 46).